Reading from the N-terminus, the 1140-residue chain is Calcium-activated potassium channel slo-1 (1140 aa).

At 1–44 the chain is on the extracellular side; the sequence is MGEIYSPSQSKGFNQPYGYPMNCNLSRVFMEMTEEDRKCLEERK. Residues 45-65 form a helical membrane-spanning segment; that stretch reads YWCFLLSSITTFCASMILVVI. Residues 66–139 lie on the Cytoplasmic side of the membrane; sequence WRVVTHLCCQ…LISGQSLTGR (74 aa). Residues 140-161 form a helical membrane-spanning segment; sequence FLVLLVFILSIGSLIIYFYDAS. Over 162–178 the chain is Extracellular; it reads FQNFQVETCIPWQDSPS. Residues 179 to 199 traverse the membrane as a helical segment; it reads QQIDLGFNIFFLVYFFIRFIA. The Cytoplasmic segment spans residues 200–203; it reads ASDK. A helical transmembrane segment spans residues 204–224; that stretch reads VWFLLEMYSWIDFFTIPPSFV. Residues 225-228 are Extracellular-facing; sequence AIYL. The chain crosses the membrane as a helical; Voltage-sensor span at residues 229–249; sequence QRNWLGFRFLRALRLMTVPDI. Topologically, residues 250–264 are cytoplasmic; the sequence is LQYLNILKTSSSIRL. The chain crosses the membrane as a helical span at residues 265–285; that stretch reads TQLVTIFVAVCLTGAGLVHLL. Residues 286–299 lie on the Extracellular side of the membrane; the sequence is ENSGDFFKGFINPH. Positions 300 to 322 form an intramembrane region, pore-forming; it reads RITYADSVYFVLVTMSTVGYGDI. The short motif at 316-319 is the Selectivity for potassium element; that stretch reads TVGY. Over 323 to 331 the chain is Extracellular; it reads YCTTLCGRL. A helical membrane pass occupies residues 332–352; sequence FMIFFILFGLAMFASYVPEIA. Residues 353–1140 lie on the Cytoplasmic side of the membrane; sequence DLIGNRQKYG…LEYEPGKRHF (788 aa). In terms of domain architecture, RCK N-terminal 1 spans 371 to 514; sequence KKHIVVCGHI…DWKRGDDVIC (144 aa). A segment S7 region spans residues 520–540; it reads LGFIAQSCLAPGFSTMMANLF. A segment S8 region spans residues 578 to 598; that stretch reads MTFPEAVDLLFNRLGLLLLAI. Positions 797–817 are segment S9; sequence VLNGHVVVCLFADQDSPLIGL. Residues 799-953 enclose the RCK N-terminal 2 domain; it reads NGHVVVCLFA…GAKFGTNVPM (155 aa). The Calcium bowl motif lies at 955 to 977; that stretch reads TELVNDSNVQFLDQDDDDDPDTE. Ca(2+) is bound by residues glutamine 964, aspartate 967, aspartate 970, and aspartate 972. The interval 984–1004 is segment S10; the sequence is FACGTAFAISVLDSLMSTTYF.

Belongs to the potassium channel family. Calcium-activated (TC 1.A.1.3) subfamily. Slo sub-subfamily. As to quaternary structure, homotetramer; which constitutes the calcium-activated potassium channel. In terms of processing, phosphorylated. Expressed in synaptic regions of the nervous system including in both the nerve ring and nerve cords, as well as in the body-wall and vulval muscle. Expressed broadly in motor neurons. Forms puncta at presynaptic terminals of neurons, muscle excitation sites, and in the dorsal nerve cord.

Its subcellular location is the cell membrane. The protein resides in the synapse. In terms of biological role, potassium channel activated by both membrane depolarization or increase in cytosolic Ca(2+) that mediates export of K(+). Its activation dampens the excitatory events that elevate the cytosolic Ca(2+) concentration and/or depolarize the cell membrane. It therefore contributes to repolarization of the membrane potential. Essential for the regulation of neurotransmitter release at synapses. Regulates longevity and age-associated decline in motor activity in mid-late life, by acting in motor neurons and through daf-16 in the intestine. When clustered in neurons, mediates ethanol-induced suppression of locomotory and egg-laying behaviors. This chain is Calcium-activated potassium channel slo-1, found in Caenorhabditis elegans.